The primary structure comprises 89 residues: Small ribosomal subunit protein uS15 (89 aa).

The protein belongs to the universal ribosomal protein uS15 family. In terms of assembly, part of the 30S ribosomal subunit. Forms a bridge to the 50S subunit in the 70S ribosome, contacting the 23S rRNA.

Its function is as follows. One of the primary rRNA binding proteins, it binds directly to 16S rRNA where it helps nucleate assembly of the platform of the 30S subunit by binding and bridging several RNA helices of the 16S rRNA. Forms an intersubunit bridge (bridge B4) with the 23S rRNA of the 50S subunit in the ribosome. This chain is Small ribosomal subunit protein uS15, found in Vibrio parahaemolyticus serotype O3:K6 (strain RIMD 2210633).